Reading from the N-terminus, the 258-residue chain is Polysialic acid transport protein KpsM (258 aa).

Topologically, residues methionine 1–leucine 30 are cytoplasmic. The ABC transmembrane type-2 domain occupies leucine 30 to arginine 251. A helical transmembrane segment spans residues glycine 31–methionine 54. At histidine 55 to isoleucine 61 the chain is on the periplasmic side. Residues serine 62 to serine 81 form a helical membrane-spanning segment. Residues lysine 82 to alanine 108 lie on the Cytoplasmic side of the membrane. Residues arginine 109 to glycine 132 form a helical membrane-spanning segment. Residues glutamate 133–leucine 143 are Periplasmic-facing. Residues valine 144 to glycine 165 form a helical membrane-spanning segment. Residues lysine 166 to valine 174 are Cytoplasmic-facing. Residues leucine 175–isoleucine 195 form a helical membrane-spanning segment. At proline 196–glutamate 226 the chain is on the periplasmic side. The chain crosses the membrane as a helical span at residues glycine 227–leucine 247. Residues tyrosine 248 to serine 258 are Cytoplasmic-facing.

The protein belongs to the ABC-2 integral membrane protein family.

It localises to the cell inner membrane. Its function is as follows. KpsM and KpsT constitute a system for the transport of polysialic acid across the cytoplasmic membrane. The sequence is that of Polysialic acid transport protein KpsM (kpsM) from Escherichia coli.